The chain runs to 648 residues: FAD-binding monooxygenase trt3 (648 aa).

FAD contacts are provided by residues 118-121, 130-131, and Tyr-136; these read TWYW and DI. An NADP(+)-binding site is contributed by 128 to 130; it reads MCD. NADP(+)-binding positions include 274 to 280 and 297 to 298; these read TGSTAVQ and RT.

It belongs to the FAD-binding monooxygenase family. The cofactor is FAD.

It participates in secondary metabolite biosynthesis; terpenoid biosynthesis. Its function is as follows. FAD-binding monooxygenase; part of the gene cluster that mediates the biosynthesis of terretonin, a fungal meroterpenoid that acts as a mycotoxin. The first step of the pathway is the synthesis of 3,5-dimethylorsellinic acid (DMOA) by the polyketide synthase trt4. DMOA is then prenylated into farnesyl-DMOA by the polyprenyl transferase trt2. Methylation by the methyltransferase trt5 then leads to farnesyl-DMOA methyl ester which is further subject to epoxidation by the FAD-dependent monooxygenase trt8 to yield epoxyfarnesyl-DMOA methyl ester. Cyclization of epoxyfarnesyl-DMOA methyl ester by the terpene cyclase trt1 leads to a tetracycle intermediate which is in turn converted to preterretonin. Dehydrogenase trt9 comes next to transform preterretonin to preterrenoid. The FAD-dependent monooxygenase trt3 is then required for the C-hydroxylation at C16 of preterrenoid to yield terrenoid. The cytochrome P450 trt6 catalyzes three successive oxidations to transform terrenoid into an unstable intermediate, which then undergoes the D-ring expansion and unusual rearrangement of the methoxy group to afford the core skeleton of terretonin. Trt14 catalyzes the D-ring expansion of terretonin involving intramolecular methoxy rearrangement as well as the hydrolysis of the expanded D-ring and the methyl ester moiety. Finally, the nonheme iron-dependent dioxygenase trt7 accomplishes the last two oxidation reactions steps to complete the biosynthesis of terretonin. Terretonin C is produced via spontaneous decarboxylation of the terretonin precursor. Another shunt product of the terretonin biosynthesis is dihydrofarnesyl-DMOA, derived from epoxyfarnesyl-DMOA through hydrolysis of the epoxide. This chain is FAD-binding monooxygenase trt3, found in Aspergillus terreus (strain NIH 2624 / FGSC A1156).